We begin with the raw amino-acid sequence, 350 residues long: 3-dehydroquinate synthase (350 aa).

NAD(+)-binding positions include 63 to 68, 97 to 101, 121 to 122, Lys134, Lys143, and 161 to 164; these read DGEEYK, GVIGD, TT, and FLKT. The Zn(2+) site is built by Glu176, His235, and His252.

Belongs to the sugar phosphate cyclases superfamily. Dehydroquinate synthase family. Co(2+) serves as cofactor. Zn(2+) is required as a cofactor. The cofactor is NAD(+).

The protein resides in the cytoplasm. The catalysed reaction is 7-phospho-2-dehydro-3-deoxy-D-arabino-heptonate = 3-dehydroquinate + phosphate. Its pathway is metabolic intermediate biosynthesis; chorismate biosynthesis; chorismate from D-erythrose 4-phosphate and phosphoenolpyruvate: step 2/7. Functionally, catalyzes the conversion of 3-deoxy-D-arabino-heptulosonate 7-phosphate (DAHP) to dehydroquinate (DHQ). This is 3-dehydroquinate synthase from Sulfurovum sp. (strain NBC37-1).